Here is a 406-residue protein sequence, read N- to C-terminus: MSATMAEYQSSTSRRYDTQIHRRVTRTVNVGGVLIGSDHPVRVQSMINEDTLDVEGATAGIRRLHEAGCEIVRLTVPSLGHAKAVGEICQRLRETYQPVPLVADVHHNGMKIALEVANHVDKVRINPGLFVFDKADPDRTEFSGEEIASIRERIAENFEPLVTRLKQQDKALRIGVNHGSLAERMLFAYGDTPLGMVESAMEFVRICDSLDFHNIVISMKASRAPVMLAAYRLMADTMDQEGFNYPLHLGVTEAGDGDYGRIKSTAGIATLLAEGLGDTIRVSLTEAPEKEIPVCYSILQSIGLRKTMVEYISCPSCGRTLFNLEEVVQKVRDSTSHLVGLDIAVMGCIVNGPGEMADADYGYVGKGPGVISLYRGRDEIRKVSESEGVDALIQLIKDDGRWVDPP.

[4Fe-4S] cluster-binding residues include cysteine 314, cysteine 317, cysteine 348, and glutamate 355.

This sequence belongs to the IspG family. It depends on [4Fe-4S] cluster as a cofactor.

The catalysed reaction is (2E)-4-hydroxy-3-methylbut-2-enyl diphosphate + 2 oxidized [2Fe-2S]-[ferredoxin] + H2O = 2-C-methyl-D-erythritol 2,4-cyclic diphosphate + 2 reduced [2Fe-2S]-[ferredoxin] + H(+). It participates in isoprenoid biosynthesis; isopentenyl diphosphate biosynthesis via DXP pathway; isopentenyl diphosphate from 1-deoxy-D-xylulose 5-phosphate: step 5/6. In terms of biological role, converts 2C-methyl-D-erythritol 2,4-cyclodiphosphate (ME-2,4cPP) into 1-hydroxy-2-methyl-2-(E)-butenyl 4-diphosphate. This is 4-hydroxy-3-methylbut-2-en-1-yl diphosphate synthase (ferredoxin) from Prochlorococcus marinus (strain MIT 9313).